Consider the following 241-residue polypeptide: MORN repeat-containing protein 3 (241 aa).

The interval 6 to 35 is interaction with MDM2; it reads CPQKSEPLWKEWDQKAQKNGLRHQVFAVNG. MORN repeat units lie at residues 38–60, 62–84, 91–113, 114–136, 137–159, 160–182, and 184–205; these read YVGE…KNGA, YEGD…DQET, YSGW…PKEY, YEGD…NGDI, YEGQ…NGNR, YEGN…DHGQ, and FEGF…GRDE. Residues 76–100 are interaction with SIRT1; that stretch reads TLSLPDQETGKYKRAYSGWWKGDKK. The tract at residues 206–240 is interaction with TP53; the sequence is APQPTQFPIPEVKILDPDGVLEEALAMFKKTKEEG.

In terms of assembly, interacts with MEIG1. Interacts with TP53, MDM2 and SIRT1; the interactions mediate post-transcriptional modifications of TP53 by MDM2 and SIRT1.

The protein resides in the cytoplasmic vesicle. The protein localises to the secretory vesicle. It localises to the acrosome. Its function is as follows. Assembles a suppression complex (suppresome) by tethering SIRT1 and MDM2 to regulate composite modifications of p53/TP53. Confers both deacetylation-mediated functional inactivation, by SIRT1, and ubiquitination-dependent degradation, by MDM2, of p53/TP53, promoting a proliferative and cell survival behaviors. May play a role in the regulation of spermatogenesis. This chain is MORN repeat-containing protein 3 (MORN3), found in Bos taurus (Bovine).